The chain runs to 390 residues: Spore development regulator vosA (390 aa).

Residues 3-132 form the Velvet domain; sequence NNTSSDFDLI…ADQGVKLRIR (130 aa). The segment covering 137–149 has biased composition (basic and acidic residues); it reads TMLKRSTRPDEFH. Disordered regions lie at residues 137–191 and 265–390; these read TMLK…PVKR and QASA…GTPQ. The segment covering 165-175 has biased composition (low complexity); it reads PPSSSYGGYPP. Positions 273–280 match the Nuclear localization signal motif; it reads IPDPTGQS. 2 stretches are compositionally biased toward polar residues: residues 350 to 364 and 371 to 390; these read QTPQ…SQMV and SSVT…GTPQ.

It belongs to the velvet family. VosA subfamily. Forms a heterodimeric complex with velB; the formation of the velB-vosA complex is light-dependent. Interacts with velA, velB and velC.

The protein resides in the nucleus. Component of the velB-VosA heterodimeric complex that plays a dual role in activating genes associated with spore maturation and repressing certain development-associated genes. The complex binds DNA through the DNA-binding domain of vosA that recognizes an 11-nucleotide consensus sequence 5'-CTGGCCGCGGC-3' consisting of two motifs in the promoters of key developmental regulatory genes. The chain is Spore development regulator vosA from Penicillium rubens (strain ATCC 28089 / DSM 1075 / NRRL 1951 / Wisconsin 54-1255) (Penicillium chrysogenum).